We begin with the raw amino-acid sequence, 412 residues long: Lipoyl synthase, mitochondrial (412 aa).

The N-terminal 28 residues, 1–28 (MASIAPSLKRAHAPLRKALTASSTIRAF), are a transit peptide targeting the mitochondrion. Residues C124, C129, C135, C155, C159, C162, and S372 each contribute to the [4Fe-4S] cluster site. The region spanning 138–361 (GSDKNAATAT…NKRALDMGFL (224 aa)) is the Radical SAM core domain.

The protein belongs to the radical SAM superfamily. Lipoyl synthase family. The cofactor is [4Fe-4S] cluster.

It is found in the mitochondrion. The catalysed reaction is [[Fe-S] cluster scaffold protein carrying a second [4Fe-4S](2+) cluster] + N(6)-octanoyl-L-lysyl-[protein] + 2 oxidized [2Fe-2S]-[ferredoxin] + 2 S-adenosyl-L-methionine + 4 H(+) = [[Fe-S] cluster scaffold protein] + N(6)-[(R)-dihydrolipoyl]-L-lysyl-[protein] + 4 Fe(3+) + 2 hydrogen sulfide + 2 5'-deoxyadenosine + 2 L-methionine + 2 reduced [2Fe-2S]-[ferredoxin]. The protein operates within protein modification; protein lipoylation via endogenous pathway; protein N(6)-(lipoyl)lysine from octanoyl-[acyl-carrier-protein]: step 2/2. Catalyzes the radical-mediated insertion of two sulfur atoms into the C-6 and C-8 positions of the octanoyl moiety bound to the lipoyl domains of lipoate-dependent enzymes, thereby converting the octanoylated domains into lipoylated derivatives. This is Lipoyl synthase, mitochondrial from Fusarium vanettenii (strain ATCC MYA-4622 / CBS 123669 / FGSC 9596 / NRRL 45880 / 77-13-4) (Fusarium solani subsp. pisi).